An 87-amino-acid polypeptide reads, in one-letter code: Small ribosomal subunit protein uS15 (87 aa).

Residues 1-22 (MSEINKAEIVASNARAPSDTGS) form a disordered region.

The protein belongs to the universal ribosomal protein uS15 family. In terms of assembly, part of the 30S ribosomal subunit. Forms a bridge to the 50S subunit in the 70S ribosome, contacting the 23S rRNA.

In terms of biological role, one of the primary rRNA binding proteins, it binds directly to 16S rRNA where it helps nucleate assembly of the platform of the 30S subunit by binding and bridging several RNA helices of the 16S rRNA. Its function is as follows. Forms an intersubunit bridge (bridge B4) with the 23S rRNA of the 50S subunit in the ribosome. In Leptothrix cholodnii (strain ATCC 51168 / LMG 8142 / SP-6) (Leptothrix discophora (strain SP-6)), this protein is Small ribosomal subunit protein uS15.